The following is a 130-amino-acid chain: Lysozyme C, kidney isozyme (130 aa).

Residues Lys1–Val130 form the C-type lysozyme domain. Intrachain disulfides connect Cys6/Cys128, Cys30/Cys116, Cys65/Cys81, and Cys77/Cys95. Residues Glu35 and Asp53 contribute to the active site.

Belongs to the glycosyl hydrolase 22 family. As to quaternary structure, monomer.

It localises to the secreted. It carries out the reaction Hydrolysis of (1-&gt;4)-beta-linkages between N-acetylmuramic acid and N-acetyl-D-glucosamine residues in a peptidoglycan and between N-acetyl-D-glucosamine residues in chitodextrins.. Its function is as follows. Lysozymes have primarily a bacteriolytic function; those in tissues and body fluids are associated with the monocyte-macrophage system and enhance the activity of immunoagents. This Ovis aries (Sheep) protein is Lysozyme C, kidney isozyme.